We begin with the raw amino-acid sequence, 380 residues long: Zinc finger protein neuro-d4 (380 aa).

Residues 132-164 (ALLDCQKPPPGDFAHDAEGDEMEDDAPRRKNKA) form a disordered region. Residues 190 to 213 (YVCDICGKRYKNRPGLSYHYTHTH) form a C2H2-type zinc finger. 2 PHD-type zinc fingers span residues 262 to 321 (EGPC…CKNC) and 318 to 368 (CKNC…CLRQ). 16 residues coordinate Zn(2+): C265, C268, C286, C289, H294, C297, C315, C318, C321, C324, C336, C339, H344, C347, C362, and C365.

Belongs to the requiem/DPF family. Component of neuron-specific chromatin remodeling complex (nBAF complex), a subfamily of ATP-dependent SWI/SNF chromatin remodeling complexes.

The protein resides in the cytoplasm. The protein localises to the nucleus. Functionally, may have an important role in developing neurons by participating in regulation of cell survival, possibly as a neurospecific transcription factor. Belongs to the neuron-specific chromatin remodeling complex (nBAF complex) and plays a role in neural development. In Gallus gallus (Chicken), this protein is Zinc finger protein neuro-d4.